We begin with the raw amino-acid sequence, 406 residues long: Lysosome-associated membrane glycoprotein 1 (406 aa).

Positions 1–24 (MAAPGARRPLLLLLLAGLAHGASA) are cleaved as a signal peptide. A first lumenal domain region spans residues 25-188 (LFEVKNNGTT…SKEETHCTQD (164 aa)). Over 25-370 (LFEVKNNGTT…VEECVQDGNN (346 aa)) the chain is Lumenal. Residues asparagine 31, asparagine 52, asparagine 58, asparagine 70, asparagine 78, asparagine 97, asparagine 101, asparagine 115, asparagine 159, and asparagine 177 are each glycosylated (N-linked (GlcNAc...) asparagine). Cysteines 35 and 74 form a disulfide. A disulfide bridge connects residues cysteine 149 and cysteine 185. The segment at 180–207 (KEETHCTQDGPSPTTGPPSPSPPLVPTN) is disordered. The segment at 189–218 (GPSPTTGPPSPSPPLVPTNPTVSKYNVTGN) is hinge. Residues 193 to 205 (TTGPPSPSPPLVP) are compositionally biased toward pro residues. 4 N-linked (GlcNAc...) asparagine glycosylation sites follow: asparagine 214, asparagine 219, asparagine 232, and asparagine 240. The interval 219-370 (NGTCLLASMA…VEECVQDGNN (152 aa)) is second lumenal domain. Residues cysteine 222 and cysteine 259 are joined by a disulfide bond. Residue asparagine 252 is glycosylated (N-linked (GlcNAc...) (high mannose) asparagine). N-linked (GlcNAc...) asparagine glycans are attached at residues asparagine 282, asparagine 296, and asparagine 311. Cysteine 327 and cysteine 364 are disulfide-bonded. The helical transmembrane segment at 371–394 (MLIPIAVGGALAGLVLIVLIAYLI) threads the bilayer. The Cytoplasmic segment spans residues 395-406 (GRKRSHAGYQTI).

It belongs to the LAMP family. In terms of assembly, interacts with ABCB9; this interaction strongly stabilizes ABCB9 and protects ABCB9 against lysosomal degradation. Interacts with FURIN. Interacts with TMEM175; inhibiting the proton channel activity of TMEM175. O- and N-glycosylated; some of the N-glycans attached to LAMP-1 are polylactosaminoglycans.

Its subcellular location is the lysosome membrane. The protein resides in the endosome membrane. It is found in the late endosome membrane. It localises to the cell membrane. The protein localises to the cytolytic granule membrane. Functionally, lysosomal membrane glycoprotein which plays an important role in lysosome biogenesis, lysosomal pH regulation, autophagy and cholesterol homeostasis. Acts as an important regulator of lysosomal lumen pH regulation by acting as a direct inhibitor of the proton channel TMEM175, facilitating lysosomal acidification for optimal hydrolase activity. Also plays an important role in NK-cells cytotoxicity. Mechanistically, participates in cytotoxic granule movement to the cell surface and perforin trafficking to the lytic granule. In addition, protects NK-cells from degranulation-associated damage induced by their own cytotoxic granule content. Presents carbohydrate ligands to selectins. Also implicated in tumor cell metastasis. In Mus musculus (Mouse), this protein is Lysosome-associated membrane glycoprotein 1 (Lamp1).